The following is a 104-amino-acid chain: Small ribosomal subunit protein uS10 (104 aa).

This sequence belongs to the universal ribosomal protein uS10 family. Part of the 30S ribosomal subunit.

Functionally, involved in the binding of tRNA to the ribosomes. This chain is Small ribosomal subunit protein uS10, found in Xanthomonas oryzae pv. oryzae (strain MAFF 311018).